The chain runs to 487 residues: Cobyric acid synthase (487 aa).

One can recognise a GATase cobBQ-type domain in the interval 249-435 (GIDIAIVRLP…IHGIFDEGDF (187 aa)). Catalysis depends on C330, which acts as the Nucleophile. H427 is an active-site residue.

It belongs to the CobB/CobQ family. CobQ subfamily.

It participates in cofactor biosynthesis; adenosylcobalamin biosynthesis. In terms of biological role, catalyzes amidations at positions B, D, E, and G on adenosylcobyrinic A,C-diamide. NH(2) groups are provided by glutamine, and one molecule of ATP is hydrogenolyzed for each amidation. The sequence is that of Cobyric acid synthase from Clostridium perfringens (strain ATCC 13124 / DSM 756 / JCM 1290 / NCIMB 6125 / NCTC 8237 / Type A).